We begin with the raw amino-acid sequence, 207 residues long: Vascular endothelial growth factor B (207 aa).

An N-terminal signal peptide occupies residues 1–21; it reads MSPLLRRLLLAALLQLAPAQA. 3 cysteine pairs are disulfide-bonded: cysteine 47/cysteine 89, cysteine 78/cysteine 122, and cysteine 82/cysteine 124. Residues 122 to 139 show a composition bias toward basic and acidic residues; that stretch reads CECRPKKKDSAVKPDRAA. The segment at 122–207 is disordered; the sequence is CECRPKKKDS…AASSVAKGGA (86 aa). Positions 174–207 are enriched in low complexity; the sequence is PSAHAAPSTTSALTPGPAAAAADAAASSVAKGGA.

The protein belongs to the PDGF/VEGF growth factor family. As to quaternary structure, homodimer; disulfide-linked. Can also form heterodimer with VEGF. VEGF-B186 is O-glycosylated. Expressed in all tissues except liver. Highest levels found in heart, skeletal muscle and pancreas.

The protein localises to the secreted. Functionally, growth factor for endothelial cells. VEGF-B167 binds heparin and neuropilin-1 whereas the binding to neuropilin-1 of VEGF-B186 is regulated by proteolysis. This chain is Vascular endothelial growth factor B (VEGFB), found in Homo sapiens (Human).